A 127-amino-acid chain; its full sequence is Holo-[acyl-carrier-protein] synthase (127 aa).

The Mg(2+) site is built by Asp7 and Glu56.

This sequence belongs to the P-Pant transferase superfamily. AcpS family. Mg(2+) is required as a cofactor.

It is found in the cytoplasm. It catalyses the reaction apo-[ACP] + CoA = holo-[ACP] + adenosine 3',5'-bisphosphate + H(+). Functionally, transfers the 4'-phosphopantetheine moiety from coenzyme A to a Ser of acyl-carrier-protein. The polypeptide is Holo-[acyl-carrier-protein] synthase (Leptospira biflexa serovar Patoc (strain Patoc 1 / Ames)).